The primary structure comprises 205 residues: Protein N-terminal glutamine amidohydrolase (205 aa).

Active-site residues include Cys-28, His-81, and Asp-97.

The protein belongs to the NTAQ1 family. As to quaternary structure, monomer.

The protein localises to the cytoplasm. It is found in the cytosol. It localises to the nucleus. It catalyses the reaction N-terminal L-glutaminyl-[protein] + H2O = N-terminal L-glutamyl-[protein] + NH4(+). Its function is as follows. Mediates the side-chain deamidation of N-terminal glutamine residues to glutamate, an important step in N-end rule pathway of protein degradation. Conversion of the resulting N-terminal glutamine to glutamate renders the protein susceptible to arginylation, polyubiquitination and degradation as specified by the N-end rule. Does not act on substrates with internal or C-terminal glutamine and does not act on non-glutamine residues in any position. Does not deaminate acetylated N-terminal glutamine. With the exception of proline, all tested second-position residues on substrate peptides do not greatly influence the activity. In contrast, a proline at position 2, virtually abolishes deamidation of N-terminal glutamine. The polypeptide is Protein N-terminal glutamine amidohydrolase (Homo sapiens (Human)).